Consider the following 302-residue polypeptide: Acetyl-coenzyme A carboxylase carboxyl transferase subunit beta (302 aa).

The 270-residue stretch at 25-294 (VWTKCDSCGQ…PQEDIVTEAA (270 aa)) folds into the CoA carboxyltransferase N-terminal domain. The Zn(2+) site is built by Cys-29, Cys-32, Cys-48, and Cys-51. A C4-type zinc finger spans residues 29–51 (CDSCGQVLYRAELERNLEVCPKC).

This sequence belongs to the AccD/PCCB family. In terms of assembly, acetyl-CoA carboxylase is a heterohexamer composed of biotin carboxyl carrier protein (AccB), biotin carboxylase (AccC) and two subunits each of ACCase subunit alpha (AccA) and ACCase subunit beta (AccD). The cofactor is Zn(2+).

The protein resides in the cytoplasm. The catalysed reaction is N(6)-carboxybiotinyl-L-lysyl-[protein] + acetyl-CoA = N(6)-biotinyl-L-lysyl-[protein] + malonyl-CoA. It functions in the pathway lipid metabolism; malonyl-CoA biosynthesis; malonyl-CoA from acetyl-CoA: step 1/1. Its function is as follows. Component of the acetyl coenzyme A carboxylase (ACC) complex. Biotin carboxylase (BC) catalyzes the carboxylation of biotin on its carrier protein (BCCP) and then the CO(2) group is transferred by the transcarboxylase to acetyl-CoA to form malonyl-CoA. In Erwinia tasmaniensis (strain DSM 17950 / CFBP 7177 / CIP 109463 / NCPPB 4357 / Et1/99), this protein is Acetyl-coenzyme A carboxylase carboxyl transferase subunit beta.